A 357-amino-acid chain; its full sequence is Protein BIG GRAIN 1-like A (357 aa).

Disordered stretches follow at residues 1–146 and 208–233; these read MEIT…KELG and SSTC…GKSK. Residues 75–87 are compositionally biased toward basic and acidic residues; the sequence is DFERSRRKTDFLR. Low complexity-rich tracts occupy residues 88 to 104 and 112 to 127; these read HSNS…SSES and KSSA…QPKP. Polar residues predominate over residues 129-139; it reads RTSSVDHSSAV. Over residues 208–223 the composition is skewed to low complexity; that stretch reads SSTCSSASSFSRSCLS.

The protein belongs to the BIG GRAIN 1 (BG1) plant protein family.

The protein localises to the cell membrane. Involved in auxin transport. Regulator of the auxin signaling pathway. This chain is Protein BIG GRAIN 1-like A, found in Arabidopsis thaliana (Mouse-ear cress).